The sequence spans 334 residues: Cytoplasmic envelopment protein 2 (334 aa).

This sequence belongs to the herpesviridae cytoplasmic envelopment protein 2 family. In terms of assembly, interacts with cytoplasmic envelopment protein 3 and with the capsid.

Its subcellular location is the virion tegument. The protein localises to the host cytoplasm. The protein resides in the host nucleus. Plays a critical role in cytoplasmic virus egress. Participates in the final step of tegumentation and envelope acquisition within the host cytoplasm by directly interacting with the capsid. Upon virion binding to target cell, a signaling cascade is triggered to disrupt the interaction with the capsid, thereby preparing capsid uncoating. The polypeptide is Cytoplasmic envelopment protein 2 (ORF33) (Homo sapiens (Human)).